A 279-amino-acid polypeptide reads, in one-letter code: Protein CMSS1 (279 aa).

Residues 1-10 (MADDLGDEWW) show a composition bias toward acidic residues. The interval 1–89 (MADDLGDEWW…DVLAKSEPKP (89 aa)) is disordered. Positions 12-22 (NQPTGAGSSPE) are enriched in polar residues. A phosphoserine mark is found at Ser-19 and Ser-24. Arg-167 bears the Omega-N-methylarginine mark. Thr-212 is subject to Phosphothreonine.

Belongs to the CMS1 family.

This Homo sapiens (Human) protein is Protein CMSS1 (CMSS1).